Here is a 184-residue protein sequence, read N- to C-terminus: Ribosome-recycling factor (184 aa).

Residues 134–167 (MNDQLKKDEKNGDITEDELRSGTEDVQKATDNSI) form a disordered region.

This sequence belongs to the RRF family.

Its subcellular location is the cytoplasm. Responsible for the release of ribosomes from messenger RNA at the termination of protein biosynthesis. May increase the efficiency of translation by recycling ribosomes from one round of translation to another. This chain is Ribosome-recycling factor, found in Staphylococcus aureus (strain Mu3 / ATCC 700698).